The primary structure comprises 543 residues: MRKPAAGFLPSLLKVLLLPLAPAAAQDSTQASTPGSPLSPTEYERFFALLTPTWKAETTCRLRATHGCRNPTLVQLDQYENHGLVPDGAVCSNLPYASWFESFCQFTHYRCSNHVYYAKRVLCSQPVSILSPNTLKEIEASAEVSPTTMTSPISPHFTVTERQTFQPWPERLSNNVEELLQSSLSLGGQEQAPEHKQEQGVEHRQEPTQEHKQEEGQKQEEQEEEQEEEGKQEEGQGTKEGREAVSQLQTDSEPKFHSESLSSNPSSFAPRVREVESTPMIMENIQELIRSAQEIDEMNEIYDENSYWRNQNPGSLLQLPHTEALLVLCYSIVENTCIITPTAKAWKYMEEEILGFGKSVCDSLGRRHMSTCALCDFCSLKLEQCHSEASLQRQQCDTSHKTPFVSPLLASQSLSIGNQVGSPESGRFYGLDLYGGLHMDFWCARLATKGCEDVRVSGWLQTEFLSFQDGDFPTKICDTDYIQYPNYCSFKSQQCLMRNRNRKVSRMRCLQNETYSALSPGKSEDVVLRWSQEFSTLTLGQFG.

The first 25 residues, 1-25, serve as a signal peptide directing secretion; sequence MRKPAAGFLPSLLKVLLLPLAPAAA. The pro-ACR binding stretch occupies residues 26 to 106; the sequence is QDSTQASTPG…ASWFESFCQF (81 aa). Residues 26–273 constitute a propeptide, removed in mature form; the sequence is QDSTQASTPG…NPSSFAPRVR (248 aa). Residues 185 to 272 are disordered; the sequence is SLGGQEQAPE…SNPSSFAPRV (88 aa). The span at 192–220 shows a compositional bias: basic and acidic residues; it reads APEHKQEQGVEHRQEPTQEHKQEEGQKQE. Positions 221–231 are enriched in acidic residues; the sequence is EQEEEQEEEGK. Residues 232–243 are compositionally biased toward basic and acidic residues; the sequence is QEEGQGTKEGRE. The pro-ACR binding stretch occupies residues 319-427; it reads LPHTEALLVL…NQVGSPESGR (109 aa).

Binds proacrosin (pro-ACR). Does not bind the mature form of ACR. In terms of processing, phosphorylated on Tyr residues in capacitated sperm. The N-terminus is blocked. Post-translationally, synthesized as a 60-kDa precursor, the 32-kDa mature form is post-translationally produced by the removal of the N-terminal half of the precursor during sperm maturation in the testis and/or epididymis. Expression restricted to testis in normal tissue. Expressed in a wide spectrum of cancers, including bladder, breast, liver, lung and colon cancers.

It localises to the secreted. The protein localises to the cytoplasmic vesicle. It is found in the secretory vesicle. Its subcellular location is the acrosome. In terms of biological role, acrosomal protein that maintains proacrosin (pro-ACR) as an enzymatically inactive zymogen in the acrosome. Involved also in the acrosome formation. This Homo sapiens (Human) protein is Acrosin-binding protein.